A 1483-amino-acid polypeptide reads, in one-letter code: Guanylyl cyclase, membrane (1483 aa).

6 consecutive transmembrane segments (helical) span residues 50–70 (ISIIFLTSVLFIGTMTAYISP), 143–163 (FILRMITIGLLLFYFIFTFTA), 168–188 (LWKLFTTITLFLVSCIVLIFE), 198–218 (MVLLFIIIAISSGMTFLPSML), 219–239 (ASGGLCLFFFFYFMFYSQIAG), and 242–262 (MVLLSLVLLISWIILMIISRF). The disordered stretch occupies residues 323–376 (KKDEESNLTGKKQSKVVVSPPPPPTAAAPQQQDNEISTPQNSRKIVDPQSPSSL). A compositionally biased stretch (polar residues) spans 355–376 (DNEISTPQNSRKIVDPQSPSSL). One can recognise a Guanylate cyclase 1 domain in the interval 395 to 517 (TVLFCEIVNF…DTINTSSRMA (123 aa)). 2 disordered regions span residues 598-619 (NNTIGKGDDIASGSATGPTHPN) and 672-838 (LTSP…GDDF). The segment covering 610–619 (GSATGPTHPN) has biased composition (polar residues). Low complexity-rich tracts occupy residues 672–684 (LTSPQQQPLPQQS), 693–712 (SPRLSSTPQSTSTLQHSSST), and 720–765 (NNNN…NNNN). The span at 772-786 (SPISQNTTPTGSLSL) shows a compositional bias: polar residues. Transmembrane regions (helical) follow at residues 907–927 (ILASMLMIVALFGLSGLVDYF), 982–1002 (IITGVRYGFVFFCLIVIYVVS), 1016–1036 (VVMVFFIVLAAVLIVLTSVPP), 1040–1060 (IPLDSVILSIEIMFITICYNF), 1061–1081 (SGIKFWYSNIVCAFCIIFIEI), and 1094–1114 (IYLSHNYYLITAVLINIITSY). Positions 1168–1296 (TIFLSDIVGF…ESVQITQQME (129 aa)) constitute a Guanylate cyclase 2 domain. The Mg(2+) site is built by D1173, I1174, and D1217. 2 disordered regions span residues 1348-1369 (QPEVKTRSVSVSKSNFGGSLQY) and 1393-1483 (NQND…SESS). The span at 1354-1369 (RSVSVSKSNFGGSLQY) shows a compositional bias: polar residues. Over residues 1405–1416 (NENGNESSSSNI) the composition is skewed to low complexity. Acidic residues predominate over residues 1432-1444 (NEDDESSYEDDQE). The span at 1446 to 1465 (NQYLNNSENNKNNNNNSNQI) shows a compositional bias: low complexity.

The protein belongs to the adenylyl cyclase class-4/guanylyl cyclase family. In terms of assembly, homodimer. The cofactor is Mg(2+).

Its subcellular location is the membrane. It carries out the reaction GTP = 3',5'-cyclic GMP + diphosphate. Activated by guanosine 5'-3-O-(thio)triphosphate (GTPgammaS). Inhibited by calcium. Its function is as follows. Synthesizes cyclic GMP (cGMP) from GTP, after activation by heterotrimeric or monomeric G proteins. Involved in chemotaxis. In Dictyostelium discoideum (Social amoeba), this protein is Guanylyl cyclase, membrane (gca).